The chain runs to 453 residues: Bifunctional protein GlmU (453 aa).

A pyrophosphorylase region spans residues M1–K225. UDP-N-acetyl-alpha-D-glucosamine-binding positions include L6–G9, K20, Q71, G76–T77, Y98–D100, G135, E150, N165, and N223. Mg(2+) is bound at residue D100. Residue N223 participates in Mg(2+) binding. The segment at A226 to D246 is linker. The tract at residues G247–S453 is N-acetyltransferase. The UDP-N-acetyl-alpha-D-glucosamine site is built by R329 and K347. H359 (proton acceptor) is an active-site residue. The UDP-N-acetyl-alpha-D-glucosamine site is built by Y362 and N373. Acetyl-CoA-binding positions include A376, N382 to Y383, S401, and A419.

In the N-terminal section; belongs to the N-acetylglucosamine-1-phosphate uridyltransferase family. It in the C-terminal section; belongs to the transferase hexapeptide repeat family. Homotrimer. Mg(2+) is required as a cofactor.

Its subcellular location is the cytoplasm. The catalysed reaction is alpha-D-glucosamine 1-phosphate + acetyl-CoA = N-acetyl-alpha-D-glucosamine 1-phosphate + CoA + H(+). The enzyme catalyses N-acetyl-alpha-D-glucosamine 1-phosphate + UTP + H(+) = UDP-N-acetyl-alpha-D-glucosamine + diphosphate. Its pathway is nucleotide-sugar biosynthesis; UDP-N-acetyl-alpha-D-glucosamine biosynthesis; N-acetyl-alpha-D-glucosamine 1-phosphate from alpha-D-glucosamine 6-phosphate (route II): step 2/2. The protein operates within nucleotide-sugar biosynthesis; UDP-N-acetyl-alpha-D-glucosamine biosynthesis; UDP-N-acetyl-alpha-D-glucosamine from N-acetyl-alpha-D-glucosamine 1-phosphate: step 1/1. It participates in bacterial outer membrane biogenesis; LPS lipid A biosynthesis. Its function is as follows. Catalyzes the last two sequential reactions in the de novo biosynthetic pathway for UDP-N-acetylglucosamine (UDP-GlcNAc). The C-terminal domain catalyzes the transfer of acetyl group from acetyl coenzyme A to glucosamine-1-phosphate (GlcN-1-P) to produce N-acetylglucosamine-1-phosphate (GlcNAc-1-P), which is converted into UDP-GlcNAc by the transfer of uridine 5-monophosphate (from uridine 5-triphosphate), a reaction catalyzed by the N-terminal domain. In Burkholderia lata (strain ATCC 17760 / DSM 23089 / LMG 22485 / NCIMB 9086 / R18194 / 383), this protein is Bifunctional protein GlmU.